Consider the following 346-residue polypeptide: Biotin synthase (346 aa).

Positions 38–256 (RQVQVSTLLS…IAVARIMMPT (219 aa)) constitute a Radical SAM core domain. The [4Fe-4S] cluster site is built by C53, C57, and C60. [2Fe-2S] cluster contacts are provided by C97, C128, C188, and R260.

The protein belongs to the radical SAM superfamily. Biotin synthase family. As to quaternary structure, homodimer. [4Fe-4S] cluster serves as cofactor. [2Fe-2S] cluster is required as a cofactor.

It carries out the reaction (4R,5S)-dethiobiotin + (sulfur carrier)-SH + 2 reduced [2Fe-2S]-[ferredoxin] + 2 S-adenosyl-L-methionine = (sulfur carrier)-H + biotin + 2 5'-deoxyadenosine + 2 L-methionine + 2 oxidized [2Fe-2S]-[ferredoxin]. The protein operates within cofactor biosynthesis; biotin biosynthesis; biotin from 7,8-diaminononanoate: step 2/2. In terms of biological role, catalyzes the conversion of dethiobiotin (DTB) to biotin by the insertion of a sulfur atom into dethiobiotin via a radical-based mechanism. The protein is Biotin synthase of Escherichia coli (strain SE11).